The following is a 283-amino-acid chain: Protein-L-isoaspartate O-methyltransferase (283 aa).

The active site involves S122.

The protein belongs to the methyltransferase superfamily. L-isoaspartyl/D-aspartyl protein methyltransferase family.

Its subcellular location is the cytoplasm. The catalysed reaction is [protein]-L-isoaspartate + S-adenosyl-L-methionine = [protein]-L-isoaspartate alpha-methyl ester + S-adenosyl-L-homocysteine. Its function is as follows. Catalyzes the methyl esterification of L-isoaspartyl residues in peptides and proteins that result from spontaneous decomposition of normal L-aspartyl and L-asparaginyl residues. It plays a role in the repair and/or degradation of damaged proteins. The sequence is that of Protein-L-isoaspartate O-methyltransferase from Leptothrix cholodnii (strain ATCC 51168 / LMG 8142 / SP-6) (Leptothrix discophora (strain SP-6)).